The sequence spans 117 residues: Virion membrane protein A21 (117 aa).

Residues 1-21 (MITLFLILCYFILIFNIIVPA) traverse the membrane as a helical; Signal-anchor for type III membrane protein segment. The Virion surface segment spans residues 22-117 (ISEKMRRERA…RAYSDLFFTT (96 aa)).

This sequence belongs to the chordopoxvirinae A21 family. In terms of assembly, envelope protein part of a stable entry-fusion complex (EFC) which is at least composed of proteins A16, A21, A28, G3, G9, H2, J5, and L5. Formation of the viral membrane is necessary for the assembly of the complex. In terms of processing, contains two intramolecular disulfide bonds. They are created by the viral disulfide bond formation pathway, a poxvirus-specific pathway that operates on the cytoplasmic side of the MV membranes.

Its subcellular location is the virion membrane. Functionally, envelope protein part of the entry-fusion complex responsible for the virus membrane fusion with host cell membrane during virus entry. This chain is Virion membrane protein A21, found in Vaccinia virus (strain Ankara) (VACV).